The primary structure comprises 295 residues: Pyridoxal 5'-phosphate synthase subunit PdxS (295 aa).

D25 serves as a coordination point for D-ribose 5-phosphate. The active-site Schiff-base intermediate with D-ribose 5-phosphate is K82. Residue G154 participates in D-ribose 5-phosphate binding. D-glyceraldehyde 3-phosphate is bound at residue R166. Residues G215 and 236–237 each bind D-ribose 5-phosphate; that span reads GS.

This sequence belongs to the PdxS/SNZ family. In the presence of PdxT, forms a dodecamer of heterodimers.

It carries out the reaction aldehydo-D-ribose 5-phosphate + D-glyceraldehyde 3-phosphate + L-glutamine = pyridoxal 5'-phosphate + L-glutamate + phosphate + 3 H2O + H(+). It functions in the pathway cofactor biosynthesis; pyridoxal 5'-phosphate biosynthesis. Its function is as follows. Catalyzes the formation of pyridoxal 5'-phosphate from ribose 5-phosphate (RBP), glyceraldehyde 3-phosphate (G3P) and ammonia. The ammonia is provided by the PdxT subunit. Can also use ribulose 5-phosphate and dihydroxyacetone phosphate as substrates, resulting from enzyme-catalyzed isomerization of RBP and G3P, respectively. The protein is Pyridoxal 5'-phosphate synthase subunit PdxS of Actinobacillus pleuropneumoniae serotype 5b (strain L20).